A 257-amino-acid chain; its full sequence is Chymotrypsin-like protease VLCTLP (257 aa).

The first 18 residues, 1–18 (MVLIRVLANLLLLQLSYA), serve as a signal peptide directing secretion. A propeptide spanning residues 19–24 (QKSSEL) is cleaved from the precursor. A Peptidase S1 domain is found at 25 to 248 (VVGGDECNIN…YSDWIQSIIA (224 aa)). 6 cysteine pairs are disulfide-bonded: Cys-31–Cys-162, Cys-49–Cys-65, Cys-97–Cys-255, Cys-141–Cys-209, Cys-173–Cys-188, and Cys-199–Cys-224. N-linked (GlcNAc...) asparagine glycosylation occurs at Asn-44. His-64 (charge relay system) is an active-site residue. Asn-100 carries N-linked (GlcNAc...) asparagine glycosylation. Asp-109 functions as the Charge relay system in the catalytic mechanism. Asn-116 and Asn-153 each carry an N-linked (GlcNAc...) asparagine glycan. Catalysis depends on Ser-203, which acts as the Charge relay system. Asn-250 carries N-linked (GlcNAc...) asparagine glycosylation.

The protein belongs to the peptidase S1 family. Snake venom subfamily. In terms of assembly, monomer. Post-translationally, partial deglycosylation has not effect on enzyme activity. In terms of tissue distribution, expressed by the venom gland.

Its subcellular location is the secreted. With respect to regulation, inhibited by PMSF. In terms of biological role, snake venom serine protease with tyrosine-specific chymotrypsin-like activity. Hydrolyzes the N-acetyl-L-tyrosine ethyl ester (ATEE). Has weak fibrinogenolytic activity. Weakly hydrolyzes azocasein, Aalpha-chain (FGA) and more slowly Bbeta-chain (FGB) of fibrinogen. Optimal substrates are angiotensins I and II (AGT). The protein is Chymotrypsin-like protease VLCTLP of Macrovipera lebetinus (Levantine viper).